The sequence spans 239 residues: Small ribosomal subunit protein uS2 (239 aa).

This sequence belongs to the universal ribosomal protein uS2 family.

In Synechococcus sp. (strain CC9902), this protein is Small ribosomal subunit protein uS2.